A 308-amino-acid polypeptide reads, in one-letter code: Aspartate carbamoyltransferase catalytic subunit (308 aa).

2 residues coordinate carbamoyl phosphate: Arg59 and Thr60. Lys87 is an L-aspartate binding site. Carbamoyl phosphate contacts are provided by Arg109, His137, and Gln140. L-aspartate-binding residues include Arg170 and Arg224. Positions 265 and 266 each coordinate carbamoyl phosphate.

The protein belongs to the aspartate/ornithine carbamoyltransferase superfamily. ATCase family. Heterododecamer (2C3:3R2) of six catalytic PyrB chains organized as two trimers (C3), and six regulatory PyrI chains organized as three dimers (R2).

It carries out the reaction carbamoyl phosphate + L-aspartate = N-carbamoyl-L-aspartate + phosphate + H(+). The protein operates within pyrimidine metabolism; UMP biosynthesis via de novo pathway; (S)-dihydroorotate from bicarbonate: step 2/3. Its function is as follows. Catalyzes the condensation of carbamoyl phosphate and aspartate to form carbamoyl aspartate and inorganic phosphate, the committed step in the de novo pyrimidine nucleotide biosynthesis pathway. This chain is Aspartate carbamoyltransferase catalytic subunit, found in Flavobacterium johnsoniae (strain ATCC 17061 / DSM 2064 / JCM 8514 / BCRC 14874 / CCUG 350202 / NBRC 14942 / NCIMB 11054 / UW101) (Cytophaga johnsonae).